A 100-amino-acid chain; its full sequence is MAKKSMIEREKKRQRLVAKYASKRQELKAQLASAETQEEIMSIHRQLQRLPRNSAPSRLRNRCWLTGRPRGYYRDFGLCRNALREMAHQGLLPGVVKSSW.

It belongs to the universal ribosomal protein uS14 family. In terms of assembly, part of the 30S ribosomal subunit. Contacts proteins S3 and S10.

In terms of biological role, binds 16S rRNA, required for the assembly of 30S particles and may also be responsible for determining the conformation of the 16S rRNA at the A site. This is Small ribosomal subunit protein uS14 from Thermosynechococcus vestitus (strain NIES-2133 / IAM M-273 / BP-1).